The sequence spans 350 residues: Protein-glutamate methylesterase/protein-glutamine glutaminase 1 (350 aa).

The region spanning 6–123 is the Response regulatory domain; the sequence is RVLVVDDSAL…GRSVENYAEE (118 aa). Asp-57 carries the 4-aspartylphosphate modification. In terms of domain architecture, CheB-type methylesterase spans 159 to 350; the sequence is LGASGKIIFV…ARRVLGAVSA (192 aa). Active-site residues include Ser-171, His-197, and Asp-293.

It belongs to the CheB family. Post-translationally, phosphorylated by CheA. Phosphorylation of the N-terminal regulatory domain activates the methylesterase activity.

It localises to the cytoplasm. The catalysed reaction is [protein]-L-glutamate 5-O-methyl ester + H2O = L-glutamyl-[protein] + methanol + H(+). It carries out the reaction L-glutaminyl-[protein] + H2O = L-glutamyl-[protein] + NH4(+). In terms of biological role, involved in chemotaxis. Part of a chemotaxis signal transduction system that modulates chemotaxis in response to various stimuli. Catalyzes the demethylation of specific methylglutamate residues introduced into the chemoreceptors (methyl-accepting chemotaxis proteins or MCP) by CheR. Also mediates the irreversible deamidation of specific glutamine residues to glutamic acid. The polypeptide is Protein-glutamate methylesterase/protein-glutamine glutaminase 1 (Dechloromonas aromatica (strain RCB)).